Consider the following 180-residue polypeptide: UPF0743 protein C215.06c (180 aa).

2 consecutive C2HC LYAR-type zinc fingers follow at residues 1–26 (MVSFCCEVCQDIIKKPKLDQHRSRCH) and 27–51 (GAYFTCIDCNTTFERTDYRNHTSCM). Residues Cys-6, Cys-9, His-21, Cys-25, Cys-32, Cys-35, His-47, and Cys-50 each contribute to the Zn(2+) site. Residues 61–125 (LYRPTKKELK…KETVSSPAEQ (65 aa)) are disordered. Residues 77 to 95 (NAVNSKELSPNTDNQNTPA) show a composition bias toward polar residues. Ser-85 carries the post-translational modification Phosphoserine. The span at 100 to 111 (HSLDENEKDKEN) shows a compositional bias: basic and acidic residues.

It belongs to the UPF0743 family.

The protein resides in the nucleus. This chain is UPF0743 protein C215.06c, found in Schizosaccharomyces pombe (strain 972 / ATCC 24843) (Fission yeast).